An 88-amino-acid polypeptide reads, in one-letter code: Selenoprotein W (88 aa).

The segment at residues 10–13 (CGAU) is a cross-link (cysteinyl-selenocysteine (Cys-Sec); redox-active). Position 13 (Sec13) is a non-standard amino acid, selenocysteine. S-glutathionyl cysteine is present on Cys37.

Belongs to the SelWTH family. Selenoprotein W subfamily. In terms of assembly, interacts with DPYSL2, PRDX1, YWHAB, YWHAG, HSP70 and HSP90. In terms of tissue distribution, in the embryo, expressed in the developing nervous system and in mesoderm-derived tissues such as heart and limbs. In the adult, predominantly expressed in brain, skeletal muscle and heart.

It is found in the cytoplasm. Its function is as follows. Plays a role as a glutathione (GSH)-dependent antioxidant. May be involved in a redox-related process. May play a role in the myopathies of selenium deficiency. This Mus musculus (Mouse) protein is Selenoprotein W.